The chain runs to 95 residues: Small ribosomal subunit protein bS6 (95 aa).

The protein belongs to the bacterial ribosomal protein bS6 family.

Binds together with bS18 to 16S ribosomal RNA. This Shouchella clausii (strain KSM-K16) (Alkalihalobacillus clausii) protein is Small ribosomal subunit protein bS6.